The chain runs to 405 residues: Endo-1,4-beta-xylanase 5 (405 aa).

The N-terminal stretch at 1 to 22 is a signal peptide; it reads MTRLATLITLAGLLAVSPGAYA. Residues Asn-27 and Asn-69 are each glycosylated (N-linked (GlcNAc...) asparagine). Residues 32 to 352 enclose the GH10 domain; it reads STGAEGLNSL…KPAYTSVSSL (321 aa). Glu-166 serves as the catalytic Proton donor. N-linked (GlcNAc...) asparagine glycosylation occurs at Asn-171. The Nucleophile role is filled by Glu-273. Residues Cys-302 and Cys-308 are joined by a disulfide bond. The GPI-anchor amidated glycine moiety is linked to residue Gly-380. Positions 381–405 are cleaved as a propeptide — removed in mature form; sequence AGRETVSIAGLTLALSSLAFGMFML.

The protein belongs to the glycosyl hydrolase 10 (cellulase F) family.

It is found in the cell membrane. The protein localises to the secreted. The catalysed reaction is Endohydrolysis of (1-&gt;4)-beta-D-xylosidic linkages in xylans.. The protein operates within glycan degradation; xylan degradation. Its function is as follows. Endo-1,4-beta-xylanase involved in the hydrolysis of xylan, a major structural heterogeneous polysaccharide found in plant biomass representing the second most abundant polysaccharide in the biosphere, after cellulose. This is Endo-1,4-beta-xylanase 5 (XYL5) from Pyricularia grisea (Crabgrass-specific blast fungus).